Reading from the N-terminus, the 160-residue chain is Cyanate hydratase (160 aa).

Residues arginine 100, glutamate 103, and serine 126 contribute to the active site.

The protein belongs to the cyanase family.

It carries out the reaction cyanate + hydrogencarbonate + 3 H(+) = NH4(+) + 2 CO2. Functionally, catalyzes the reaction of cyanate with bicarbonate to produce ammonia and carbon dioxide. The protein is Cyanate hydratase of Aspergillus oryzae (strain ATCC 42149 / RIB 40) (Yellow koji mold).